Reading from the N-terminus, the 593-residue chain is Probable tripeptidyl-peptidase SED3 (593 aa).

Positions 1–18 (MLLRWHSVIPLFLTMTVA) are cleaved as a signal peptide. The propeptide at 19–198 (LPNTYRTVVE…SLQVIYSSTN (180 aa)) is removed in mature form. Asn-198, Asn-204, Asn-261, and Asn-275 each carry an N-linked (GlcNAc...) asparagine glycan. One can recognise a Peptidase S53 domain in the interval 206–592 (TITPRCLREL…RILAKIVQHM (387 aa)). Active-site charge relay system residues include Glu-282 and Asp-286. Residue Asn-295 is glycosylated (N-linked (GlcNAc...) asparagine). Ser-496 acts as the Charge relay system in catalysis. Ca(2+) is bound by residues Asp-538 and Ile-539. 2 N-linked (GlcNAc...) asparagine glycosylation sites follow: Asn-554 and Asn-566. Residues Gly-570 and Asp-572 each contribute to the Ca(2+) site.

Requires Ca(2+) as cofactor.

Its subcellular location is the secreted. The protein localises to the extracellular space. The enzyme catalyses Release of an N-terminal tripeptide from a polypeptide.. In terms of biological role, secreted tripeptidyl-peptidase which degrades proteins at acidic pHs and is involved in virulence. The polypeptide is Probable tripeptidyl-peptidase SED3 (SED3) (Trichophyton verrucosum (strain HKI 0517)).